The primary structure comprises 259 residues: Chloroplastic import inner membrane translocase subunit HP30-2 (259 aa).

The next 4 helical transmembrane spans lie at 55–75 (AVVTAMGGVQGAFIGGLMGTL), 108–124 (NFAAITGVNAGIACVMK), 135–155 (AVVAAFGSGVAYSLVSAGLQG), and 158–178 (MNAITTAAGFAVFQGVFFKLG).

It belongs to the Tim17/Tim22/Tim23 family. Probable component of a protein-conducting channel made of HP30-1, HP30-2 and HP20 that mediates the import of transit sequence-less proteins into the chloroplastic inner membrane. Interacts with CEQORH.

The protein localises to the mitochondrion membrane. The protein resides in the plastid. It localises to the chloroplast inner membrane. Functionally, together with HP30-1 and HP20, triggers the import and insertion of transit sequence-less multi-pass transmembrane proteins (e.g. CEQORH) into the chloroplastic inner membrane. The sequence is that of Chloroplastic import inner membrane translocase subunit HP30-2 from Arabidopsis thaliana (Mouse-ear cress).